A 184-amino-acid chain; its full sequence is Holliday junction branch migration complex subunit RuvA (184 aa).

Residues 1–61 (MIAALRGNIF…ENEYTLYGFA (61 aa)) form a domain I region. Residues 62–135 (DKNEKKLFDS…GEFEVVFEEQ (74 aa)) are domain II. Residue Gln135 is a region of interest, flexible linker. Positions 135 to 184 (QNPVFNQALSALESLGFNKNDIVKALNGIKSDNLEETIKLALKKLSKDIK) are domain III.

The protein belongs to the RuvA family. In terms of assembly, homotetramer. Forms an RuvA(8)-RuvB(12)-Holliday junction (HJ) complex. HJ DNA is sandwiched between 2 RuvA tetramers; dsDNA enters through RuvA and exits via RuvB. An RuvB hexamer assembles on each DNA strand where it exits the tetramer. Each RuvB hexamer is contacted by two RuvA subunits (via domain III) on 2 adjacent RuvB subunits; this complex drives branch migration. In the full resolvosome a probable DNA-RuvA(4)-RuvB(12)-RuvC(2) complex forms which resolves the HJ.

Its subcellular location is the cytoplasm. The RuvA-RuvB-RuvC complex processes Holliday junction (HJ) DNA during genetic recombination and DNA repair, while the RuvA-RuvB complex plays an important role in the rescue of blocked DNA replication forks via replication fork reversal (RFR). RuvA specifically binds to HJ cruciform DNA, conferring on it an open structure. The RuvB hexamer acts as an ATP-dependent pump, pulling dsDNA into and through the RuvAB complex. HJ branch migration allows RuvC to scan DNA until it finds its consensus sequence, where it cleaves and resolves the cruciform DNA. This Nautilia profundicola (strain ATCC BAA-1463 / DSM 18972 / AmH) protein is Holliday junction branch migration complex subunit RuvA.